The primary structure comprises 143 residues: Peptide methionine sulfoxide reductase MsrB (143 aa).

The MsrB domain maps to 16 to 139; sequence DAELRRRLTP…NSAALNFEAK (124 aa). Zn(2+) contacts are provided by C55, C58, C104, and C107. C128 functions as the Nucleophile in the catalytic mechanism.

It belongs to the MsrB Met sulfoxide reductase family. Zn(2+) serves as cofactor.

The enzyme catalyses L-methionyl-[protein] + [thioredoxin]-disulfide + H2O = L-methionyl-(R)-S-oxide-[protein] + [thioredoxin]-dithiol. In Burkholderia pseudomallei (strain 1710b), this protein is Peptide methionine sulfoxide reductase MsrB.